We begin with the raw amino-acid sequence, 245 residues long: MRQKLVIGNWKMHGSLAANAALLEGIKAAPARARLAVCAPFPYLAQCQALLNGSQVAWGAQDVSAEARGAFTGEVAASMLGEFGCTYALVGHSERRTYHGESDAVVAAKALRALEFGIIPVICVGETLAQREAGETEVVVGRQLQAALDALSVEQLGRVVLAYEPVWAIGTGKTASSEQAQAVHAFLRAEVRERDAGVADRMAILYGGSVKPDNAAELFSMSDIDGGLIGGASLKSEDFLAIGNA.

A substrate-binding site is contributed by 9-11 (NWK). The active-site Electrophile is histidine 92. Catalysis depends on glutamate 164, which acts as the Proton acceptor. Residues glycine 170, serine 209, and 230–231 (GG) contribute to the substrate site.

This sequence belongs to the triosephosphate isomerase family. In terms of assembly, homodimer.

It localises to the cytoplasm. It catalyses the reaction D-glyceraldehyde 3-phosphate = dihydroxyacetone phosphate. It participates in carbohydrate biosynthesis; gluconeogenesis. It functions in the pathway carbohydrate degradation; glycolysis; D-glyceraldehyde 3-phosphate from glycerone phosphate: step 1/1. Involved in the gluconeogenesis. Catalyzes stereospecifically the conversion of dihydroxyacetone phosphate (DHAP) to D-glyceraldehyde-3-phosphate (G3P). This Cupriavidus pinatubonensis (strain JMP 134 / LMG 1197) (Cupriavidus necator (strain JMP 134)) protein is Triosephosphate isomerase.